The chain runs to 1507 residues: Paired amphipathic helix protein sin-3 (1507 aa).

Disordered stretches follow at residues methionine 1 to alanine 26, proline 228 to valine 286, glutamate 397 to glutamate 450, valine 543 to lysine 569, and isoleucine 1349 to leucine 1434. Polar residues predominate over residues aspartate 16 to alanine 26. Positions arginine 270–lysine 279 are enriched in basic residues. The 71-residue stretch at glycine 282 to glycine 352 folds into the PAH domain. Over residues aspartate 427–glycine 438 the composition is skewed to acidic residues. Basic and acidic residues-rich tracts occupy residues isoleucine 439–glutamate 450 and glutamate 555–serine 568. Acidic residues-rich tracts occupy residues lysine 1354–asparagine 1365, asparagine 1373–aspartate 1382, and proline 1389–glutamate 1421.

In terms of assembly, component of the SIN3S complex, which contains at least sin-3, hda-1, athp-1 and mrg-1. Interacts with ztf-11; the interaction is weak. Interacts with cfp-1. As to expression, expressed in all ray structural cells including ray 6, 7, 8 and 9 of the male tail. Also expressed in the inner labial neurons, socket cells, the cephalic neurons in the head and the ventral nerve cord.

The protein localises to the nucleus. Functionally, probable transcriptional repressor required for the deposition of dimethylated 'Lys-9' of histone H3 (H3K9me2) on asynapsed chromosome pairs (both autosomes and sex chromosomes) during meiosis, but this does not seem to solely affect the transcriptional status. Plays a role in ray fusion and patterning in the male tail, and this may be through activity of the histone deacetylase complex (HDAC). The protein is Paired amphipathic helix protein sin-3 of Caenorhabditis elegans.